The following is a 473-amino-acid chain: GTPase Der (473 aa).

EngA-type G domains follow at residues 3–167 (FKVA…KGLE) and 203–378 (LRVA…TFWN). GTP-binding positions include 9–16 (GRPNVGKS), 56–60 (DTAGL), 119–122 (NKCE), 209–216 (GRPNVGKS), 256–260 (DTAGM), and 321–324 (NKWD). The 85-residue stretch at 379–463 (ARVPTARLNR…PIRLFMRKTH (85 aa)) folds into the KH-like domain.

It belongs to the TRAFAC class TrmE-Era-EngA-EngB-Septin-like GTPase superfamily. EngA (Der) GTPase family. As to quaternary structure, associates with the 50S ribosomal subunit.

Its function is as follows. GTPase that plays an essential role in the late steps of ribosome biogenesis. The sequence is that of GTPase Der from Parvibaculum lavamentivorans (strain DS-1 / DSM 13023 / NCIMB 13966).